The sequence spans 375 residues: PqqA peptide cyclase (375 aa).

The Radical SAM core domain occupies 18–235 (ILPPMAMLAE…EAREKYQGIL (218 aa)). The [4Fe-4S] cluster site is built by Cys-32, Cys-36, and Cys-39.

Belongs to the radical SAM superfamily. PqqE family. As to quaternary structure, interacts with PqqD. The interaction is necessary for activity of PqqE. The cofactor is [4Fe-4S] cluster.

It catalyses the reaction [PQQ precursor protein] + S-adenosyl-L-methionine = E-Y cross-linked-[PQQ precursor protein] + 5'-deoxyadenosine + L-methionine + H(+). Its pathway is cofactor biosynthesis; pyrroloquinoline quinone biosynthesis. Its function is as follows. Catalyzes the cross-linking of a glutamate residue and a tyrosine residue in the PqqA protein as part of the biosynthesis of pyrroloquinoline quinone (PQQ). The protein is PqqA peptide cyclase of Rhizobium meliloti (strain 1021) (Ensifer meliloti).